Here is a 65-residue protein sequence, read N- to C-terminus: Large ribosomal subunit protein bL33c (65 aa).

Belongs to the bacterial ribosomal protein bL33 family.

It localises to the plastid. It is found in the chloroplast. This chain is Large ribosomal subunit protein bL33c (rpl33), found in Marchantia polymorpha (Common liverwort).